A 155-amino-acid chain; its full sequence is Aspartate 1-decarboxylase (155 aa).

Residue S24 is the Schiff-base intermediate with substrate; via pyruvic acid of the active site. Residue S24 is modified to Pyruvic acid (Ser). Residue T56 coordinates substrate. Residue Y57 is the Proton donor of the active site. 72–74 provides a ligand contact to substrate; it reads GAA.

It belongs to the PanD family. In terms of assembly, heterooctamer of four alpha and four beta subunits. It depends on pyruvate as a cofactor. In terms of processing, is synthesized initially as an inactive proenzyme, which is activated by self-cleavage at a specific serine bond to produce a beta-subunit with a hydroxyl group at its C-terminus and an alpha-subunit with a pyruvoyl group at its N-terminus.

The protein resides in the cytoplasm. It catalyses the reaction L-aspartate + H(+) = beta-alanine + CO2. It participates in cofactor biosynthesis; (R)-pantothenate biosynthesis; beta-alanine from L-aspartate: step 1/1. Functionally, catalyzes the pyruvoyl-dependent decarboxylation of aspartate to produce beta-alanine. This Agrobacterium fabrum (strain C58 / ATCC 33970) (Agrobacterium tumefaciens (strain C58)) protein is Aspartate 1-decarboxylase.